The primary structure comprises 461 residues: MNTDLAAGKMASAACSMDPIDSFELLDLLFDRQDGILRHVELGEGWGHVKDQQVLPNPDSDDFLSSILGSGDSLPSSPLWSPEGSDSGISEDLPSDPQDTPPRSGPATSPAGCHPAQPGKGPCLSYHPGNSCSTTTPGPVIQVPEASVTIDLEMWSPGGRICAEKPADPVDLSPRCNLTVKDLLLSGSSGDLQQHHLGASYLLRPGAGHCQELVLTEDEKKLLAKEGITLPTQLPLTKYEERVLKKIRRKIRNKQSAQESRKKKKEYIDGLETRMSACTAQNQELQRKVLHLEKQNLSLLEQLKKLQAIVVQSTSKSAQTGTCVAVLLLSFALIILPSISPFGPNKTESPGDFAPVRVFSRTLHNDAASRVAADAVPGSEAPGPRPEADTTREESPGSPGADWGFQDTANLTNSTEELDNATLVLRNATEGLGQVALLDWVAPGPSTGSGRAGLEAAGDEL.

Residues 1-322 are Cytoplasmic-facing; sequence MNTDLAAGKM…STSKSAQTGT (322 aa). Residues 51–120 are disordered; the sequence is DQQVLPNPDS…AGCHPAQPGK (70 aa). The span at 63-85 shows a compositional bias: low complexity; sequence FLSSILGSGDSLPSSPLWSPEGS. The residue at position 173 (S173) is a Phosphoserine. The bZIP domain maps to 243–306; sequence VLKKIRRKIR…LSLLEQLKKL (64 aa). The tract at residues 245 to 274 is basic motif; that stretch reads KKIRRKIRNKQSAQESRKKKKEYIDGLETR. The leucine-zipper stretch occupies residues 285-306; it reads LQRKVLHLEKQNLSLLEQLKKL. K294 participates in a covalent cross-link: Glycyl lysine isopeptide (Lys-Gly) (interchain with G-Cter in ubiquitin). Residues 323-343 form a helical; Signal-anchor for type II membrane protein membrane-spanning segment; the sequence is CVAVLLLSFALIILPSISPFG. Residues 344 to 461 lie on the Lumenal side of the membrane; sequence PNKTESPGDF…AGLEAAGDEL (118 aa). The disordered stretch occupies residues 370–408; that stretch reads RVAADAVPGSEAPGPRPEADTTREESPGSPGADWGFQDT. A glycan (O-linked (GalNAc...) serine) is linked at S379. Over residues 386–395 the composition is skewed to basic and acidic residues; sequence PEADTTREES. Residues N410, N413, N420, and N427 are each glycosylated (N-linked (GlcNAc...) asparagine). Residues 442 to 461 form a disordered region; the sequence is APGPSTGSGRAGLEAAGDEL.

Belongs to the bZIP family. ATF subfamily. In terms of assembly, binds DNA as a dimer. May form homodimers. Interacts with ATF6. Interacts with SYNV1/HRD1; this interaction leads to CREB3L3 ubiquitination and proteasomal degradation. In terms of processing, controlled by regulated intramembrane proteolysis (RIP). Following ER stress a fragment containing the cytoplasmic transcription factor domain is released by proteolysis. The cleavage seems to be performed sequentially by site-1 and site-2 proteases (PS1 and PS2). N- and O-glycosylated. N-glycosylation is required for optimal proteolytic activation. O-glycosylated with core 1 or possibly core 8 glycans. Post-translationally, ubiquitinated at Lys-294 by SYNV1/HRD1 via 'Lys-27'-linked ubiquitin. In terms of tissue distribution, exclusively expressed in liver. Underexpressed in hepatocellular carcinoma tissues.

The protein resides in the endoplasmic reticulum membrane. Its subcellular location is the nucleus. Its function is as follows. Transcription factor that may act during endoplasmic reticulum stress by activating unfolded protein response target genes. Activated in response to cAMP stimulation. In vitro, binds to the cAMP response element (CRE) and box-B element. Activates transcription through box-B element. Activates transcription through CRE. May function synergistically with ATF6. In acute inflammatory response, may activate expression of acute phase response (APR) genes. May be involved in growth suppression. Regulates FGF21 transcription. Plays a crucial role in the regulation of triglyceride metabolism and is required for the maintenance of normal plasma triglyceride concentrations. The polypeptide is Cyclic AMP-responsive element-binding protein 3-like protein 3 (CREB3L3) (Homo sapiens (Human)).